The primary structure comprises 415 residues: Gamma-glutamyl phosphate reductase (415 aa).

It belongs to the gamma-glutamyl phosphate reductase family.

It localises to the cytoplasm. The enzyme catalyses L-glutamate 5-semialdehyde + phosphate + NADP(+) = L-glutamyl 5-phosphate + NADPH + H(+). Its pathway is amino-acid biosynthesis; L-proline biosynthesis; L-glutamate 5-semialdehyde from L-glutamate: step 2/2. In terms of biological role, catalyzes the NADPH-dependent reduction of L-glutamate 5-phosphate into L-glutamate 5-semialdehyde and phosphate. The product spontaneously undergoes cyclization to form 1-pyrroline-5-carboxylate. The protein is Gamma-glutamyl phosphate reductase of Thermotoga maritima (strain ATCC 43589 / DSM 3109 / JCM 10099 / NBRC 100826 / MSB8).